Here is a 202-residue protein sequence, read N- to C-terminus: Dephospho-CoA kinase (202 aa).

In terms of domain architecture, DPCK spans 5 to 202 (IVGLTGGIAS…DADYRARSDR (198 aa)). Residue 13-18 (ASGKSA) participates in ATP binding.

Belongs to the CoaE family.

Its subcellular location is the cytoplasm. It carries out the reaction 3'-dephospho-CoA + ATP = ADP + CoA + H(+). It participates in cofactor biosynthesis; coenzyme A biosynthesis; CoA from (R)-pantothenate: step 5/5. Catalyzes the phosphorylation of the 3'-hydroxyl group of dephosphocoenzyme A to form coenzyme A. The sequence is that of Dephospho-CoA kinase from Xanthomonas oryzae pv. oryzae (strain MAFF 311018).